Reading from the N-terminus, the 153-residue chain is Endoribonuclease YbeY (153 aa).

Residues His-118, His-122, and His-128 each coordinate Zn(2+).

The protein belongs to the endoribonuclease YbeY family. Requires Zn(2+) as cofactor.

The protein localises to the cytoplasm. Functionally, single strand-specific metallo-endoribonuclease involved in late-stage 70S ribosome quality control and in maturation of the 3' terminus of the 16S rRNA. This is Endoribonuclease YbeY from Staphylococcus carnosus (strain TM300).